Reading from the N-terminus, the 81-residue chain is Costars family protein ABRACL (81 aa).

It belongs to the costars family.

The polypeptide is Costars family protein ABRACL (abracl) (Xenopus laevis (African clawed frog)).